A 280-amino-acid chain; its full sequence is Orotidine 5'-phosphate decarboxylase (280 aa).

The Proton donor role is filled by K97.

The protein belongs to the OMP decarboxylase family. Type 2 subfamily.

It carries out the reaction orotidine 5'-phosphate + H(+) = UMP + CO2. Its pathway is pyrimidine metabolism; UMP biosynthesis via de novo pathway; UMP from orotate: step 2/2. This is Orotidine 5'-phosphate decarboxylase (pyrF) from Corynebacterium efficiens (strain DSM 44549 / YS-314 / AJ 12310 / JCM 11189 / NBRC 100395).